We begin with the raw amino-acid sequence, 139 residues long: Ribosome maturation factor RimP (139 aa).

The protein belongs to the RimP family.

The protein resides in the cytoplasm. Functionally, required for maturation of 30S ribosomal subunits. The polypeptide is Ribosome maturation factor RimP (Syntrophomonas wolfei subsp. wolfei (strain DSM 2245B / Goettingen)).